Reading from the N-terminus, the 267-residue chain is Cell division protein FtsQ (267 aa).

Residues 1–32 lie on the Cytoplasmic side of the membrane; that stretch reads MRKKTSSNKKKQTKKTNNISLRRKLGLMYKKA. The helical transmembrane segment at 33–53 threads the bilayer; the sequence is ILGLKIALIIFVCLFVFTKYF. Over 54 to 267 the chain is Periplasmic; that stretch reads AGIKTYLTTN…DKNKYYIEKY (214 aa). The region spanning 73 to 141 is the POTRA domain; that stretch reads FKLENVIIEG…NTVYIKLFER (69 aa).

It belongs to the FtsQ/DivIB family. FtsQ subfamily.

It localises to the cell inner membrane. Its function is as follows. Essential cell division protein. The protein is Cell division protein FtsQ of Rickettsia conorii (strain ATCC VR-613 / Malish 7).